A 224-amino-acid chain; its full sequence is Lipoprotein-releasing system ATP-binding protein LolD (224 aa).

Residues Leu5–Val224 form the ABC transporter domain. Ala42 to Ser49 contributes to the ATP binding site.

The protein belongs to the ABC transporter superfamily. Lipoprotein translocase (TC 3.A.1.125) family. The complex is composed of two ATP-binding proteins (LolD) and two transmembrane proteins (LolC and LolE).

Its subcellular location is the cell inner membrane. Functionally, part of the ABC transporter complex LolCDE involved in the translocation of mature outer membrane-directed lipoproteins, from the inner membrane to the periplasmic chaperone, LolA. Responsible for the formation of the LolA-lipoprotein complex in an ATP-dependent manner. The sequence is that of Lipoprotein-releasing system ATP-binding protein LolD from Cereibacter sphaeroides (strain ATCC 17023 / DSM 158 / JCM 6121 / CCUG 31486 / LMG 2827 / NBRC 12203 / NCIMB 8253 / ATH 2.4.1.) (Rhodobacter sphaeroides).